The following is a 249-amino-acid chain: Thioesterase TesA (249 aa).

Active-site residues include Ser-92, Asp-196, and His-224.

It belongs to the thioesterase family.

The catalysed reaction is a fatty acyl-CoA + H2O = a fatty acid + CoA + H(+). Functionally, involved in the synthesis of both phthiocerol dimycocerosates (PDIMs) and phenolic glycolipids (PGLs), which are structurally related lipids non-covalently bound to the outer cell wall layer of M.tuberculosis and are important virulence factors. This is Thioesterase TesA from Mycobacterium marinum (strain ATCC BAA-535 / M).